The chain runs to 107 residues: Thioredoxin (107 aa).

The 106-residue stretch at 2-107 folds into the Thioredoxin domain; that stretch reads DSIVHVTDDS…QLTAFLDSNX (106 aa). Residues Cys-32 and Cys-35 are joined by a disulfide bond.

It belongs to the thioredoxin family.

Participates in various redox reactions through the reversible oxidation of its active center dithiol to a disulfide and catalyzes dithiol-disulfide exchange reactions. In Allochromatium vinosum (Chromatium vinosum), this protein is Thioredoxin (trxA).